The following is a 195-amino-acid chain: Obelin (195 aa).

The propeptide occupies 1-6 (MASKYA). EF-hand domains follow at residues 17-52 (KWIKRHKFMFDYLDINGNGQITLDEIVSKASDDICK), 53-88 (NLGATPAQTQRHQDCVEAFFRGCGLEYGKETKFPEF), 110-145 (LIREWGDAVFDIFDKDGSGTITLDEWKAYGRISGIS), and 146-181 (PSEEDCEKTFQHCDLDNSGELDVDEMTRQHLGFWYT). Residues aspartate 30, asparagine 32, asparagine 34, glutamine 36, and glutamate 41 each contribute to the Ca(2+) site. The Ca(2+) site is built by aspartate 123, aspartate 125, serine 127, threonine 129, glutamate 134, aspartate 159, aspartate 161, serine 163, glutamate 165, and glutamate 170.

It belongs to the aequorin family.

Its function is as follows. Ca(2+)-dependent bioluminescence photoprotein. Displays an emission peak at 495 nm (blue light). Trace amounts of calcium ion trigger the intramolecular oxidation of the chromophore, coelenterazine into coelenteramide and CO(2) with the concomitant emission of light. This is Obelin from Obelia geniculata (Knotted thread hydroid).